Reading from the N-terminus, the 177-residue chain is ATP-dependent protease subunit HslV (177 aa).

T6 is an active-site residue. S161, C164, and T167 together coordinate Na(+).

It belongs to the peptidase T1B family. HslV subfamily. A double ring-shaped homohexamer of HslV is capped on each side by a ring-shaped HslU homohexamer. The assembly of the HslU/HslV complex is dependent on binding of ATP.

It localises to the cytoplasm. The enzyme catalyses ATP-dependent cleavage of peptide bonds with broad specificity.. Its activity is regulated as follows. Allosterically activated by HslU binding. Its function is as follows. Protease subunit of a proteasome-like degradation complex believed to be a general protein degrading machinery. The chain is ATP-dependent protease subunit HslV from Thermodesulfovibrio yellowstonii (strain ATCC 51303 / DSM 11347 / YP87).